The primary structure comprises 299 residues: CCR4-NOT transcription complex subunit 9 (299 aa).

The residue at position 1 (Met1) is an N-acetylmethionine.

Belongs to the CNOT9 family. As to quaternary structure, homodimer. Component of the CCR4-NOT complex; distinct complexes seem to exist that differ in the participation of probably mutually exclusive catalytic subunits. Interacts with MYB, ATF2, RARA, RARB, RARG, RXRA, RXRB and RXRG. Identified in a complex with ATF2 bound to target DNA. Interacts with NANOS2. Directly interacts with ZNF335.

It is found in the nucleus. It localises to the cytoplasm. Its subcellular location is the P-body. Component of the CCR4-NOT complex which is one of the major cellular mRNA deadenylases and is linked to various cellular processes including bulk mRNA degradation, miRNA-mediated repression, translational repression during translational initiation and general transcription regulation. Additional complex functions may be a consequence of its influence on mRNA expression. Involved in down-regulation of MYB- and JUN-dependent transcription. Enhances ligand-dependent transcriptional activity of nuclear hormone receptors. May play a role in cell differentiation. This chain is CCR4-NOT transcription complex subunit 9, found in Bos taurus (Bovine).